Reading from the N-terminus, the 793-residue chain is Potassium transporter 18 (793 aa).

Topologically, residues 1–53 (METRTNEYSRKGAMWELERNLDQPMDAEAGRLRNMYREKTYPTILLLRLAFQS) are cytoplasmic. The helical transmembrane segment at 54–74 (LGVVFGDLGTSPLYVFYNIFP) threads the bilayer. Topologically, residues 75 to 86 (HGIEDTEQVIGA) are extracellular. A helical transmembrane segment spans residues 87 to 107 (LSLIIYSLTLIPLVKYVFIVL). Over 108–172 (RANDNGQGGT…WLEGHQFRKN (65 aa)) the chain is Cytoplasmic. Residues 173–193 (LILILVLFGTCMAVGDGILTP) form a helical membrane-spanning segment. Residues 194 to 214 (AISVLSATGGIQVEEGRMRND) are Extracellular-facing. The chain crosses the membrane as a helical span at residues 215–235 (VVVIISVLILIGLFSMQHYGT). Residues 236 to 237 (DK) are Cytoplasmic-facing. Residues 238–258 (VSWLFAPIVFVWFILIGILGA) traverse the membrane as a helical segment. Over 259–287 (VNICKYDHSVLKAFNPVYVYRYFKRGKTS) the chain is Extracellular. A helical transmembrane segment spans residues 288–308 (WTSLGGIMLSITGTEALFADL). Ser-309 is a topological domain (cytoplasmic). A helical membrane pass occupies residues 310–330 (YFPVQAIQIAFTVVVFPCLLL). Over 331 to 351 (QYTGQAAFIAANTNQVSHAFY) the chain is Extracellular. The chain crosses the membrane as a helical span at residues 352–372 (ISLPAPILWPAFAVATAAAIV). Topologically, residues 373 to 409 (ASQATISATYSIIKQALALGCFPRVKIIHTSKKYLGQ) are cytoplasmic. Residues 410–430 (IYSPDINWILMVFCIAVTAGF) form a helical membrane-spanning segment. Residues 431–442 (KNQSQIANAYGT) lie on the Extracellular side of the membrane. Asn-432 is a glycosylation site (N-linked (GlcNAc...) asparagine). Residues 443 to 463 (AVIMVMLVTTFLMIPIMLLVW) form a helical membrane-spanning segment. The Cytoplasmic portion of the chain corresponds to 464–468 (RSHWT). A helical membrane pass occupies residues 469-489 (LVVAFTVLSLLVEIPYFSAVV). Over 490 to 494 (RKIDQ) the chain is Extracellular. Residues 495–515 (GGWVPLVFAAGFMIIMYVWHY) traverse the membrane as a helical segment. At 516–793 (GTLKRYEFEM…MLNVGQVFYV (278 aa)) the chain is on the cytoplasmic side.

It belongs to the HAK/KUP transporter (TC 2.A.72.3) family.

The protein localises to the membrane. High-affinity potassium transporter. The protein is Potassium transporter 18 (HAK18) of Oryza sativa subsp. japonica (Rice).